Consider the following 347-residue polypeptide: D-alanine--D-alanine ligase (347 aa).

One can recognise an ATP-grasp domain in the interval 131-333; it reads KRVLESAGIA…YPELIERLVD (203 aa). Position 161 to 216 (161 to 216) interacts with ATP; sequence EEKLAYPVFTKPSNMGSSVGISKSENQEELRQALELAFRYDSRVLVEQGVNAREIE. Mg(2+)-binding residues include Asp-287, Glu-300, and Asn-302.

It belongs to the D-alanine--D-alanine ligase family. Requires Mg(2+) as cofactor. Mn(2+) is required as a cofactor.

Its subcellular location is the cytoplasm. It catalyses the reaction 2 D-alanine + ATP = D-alanyl-D-alanine + ADP + phosphate + H(+). The protein operates within cell wall biogenesis; peptidoglycan biosynthesis. Cell wall formation. This Streptococcus pneumoniae (strain CGSP14) protein is D-alanine--D-alanine ligase.